Here is a 412-residue protein sequence, read N- to C-terminus: Multifunctional CCA protein (412 aa).

Positions 8 and 11 each coordinate ATP. CTP contacts are provided by glycine 8 and arginine 11. The Mg(2+) site is built by aspartate 21 and aspartate 23. Arginine 91, arginine 137, and arginine 140 together coordinate ATP. CTP contacts are provided by arginine 91, arginine 137, and arginine 140. The 102-residue stretch at 228 to 329 (TGIHTLMTLS…VKLFDSIDAW (102 aa)) folds into the HD domain.

It belongs to the tRNA nucleotidyltransferase/poly(A) polymerase family. Bacterial CCA-adding enzyme type 1 subfamily. As to quaternary structure, monomer. Can also form homodimers and oligomers. Mg(2+) is required as a cofactor. The cofactor is Ni(2+).

The enzyme catalyses a tRNA precursor + 2 CTP + ATP = a tRNA with a 3' CCA end + 3 diphosphate. It catalyses the reaction a tRNA with a 3' CCA end + 2 CTP + ATP = a tRNA with a 3' CCACCA end + 3 diphosphate. Its function is as follows. Catalyzes the addition and repair of the essential 3'-terminal CCA sequence in tRNAs without using a nucleic acid template. Adds these three nucleotides in the order of C, C, and A to the tRNA nucleotide-73, using CTP and ATP as substrates and producing inorganic pyrophosphate. tRNA 3'-terminal CCA addition is required both for tRNA processing and repair. Also involved in tRNA surveillance by mediating tandem CCA addition to generate a CCACCA at the 3' terminus of unstable tRNAs. While stable tRNAs receive only 3'-terminal CCA, unstable tRNAs are marked with CCACCA and rapidly degraded. This Escherichia coli O127:H6 (strain E2348/69 / EPEC) protein is Multifunctional CCA protein.